The chain runs to 206 residues: Large ribosomal subunit protein uL4 (206 aa).

This sequence belongs to the universal ribosomal protein uL4 family. As to quaternary structure, part of the 50S ribosomal subunit.

Functionally, one of the primary rRNA binding proteins, this protein initially binds near the 5'-end of the 23S rRNA. It is important during the early stages of 50S assembly. It makes multiple contacts with different domains of the 23S rRNA in the assembled 50S subunit and ribosome. In terms of biological role, forms part of the polypeptide exit tunnel. The polypeptide is Large ribosomal subunit protein uL4 (Methylorubrum extorquens (strain CM4 / NCIMB 13688) (Methylobacterium extorquens)).